Consider the following 149-residue polypeptide: Large ribosomal subunit protein bL9 (149 aa).

The protein belongs to the bacterial ribosomal protein bL9 family.

Its function is as follows. Binds to the 23S rRNA. The polypeptide is Large ribosomal subunit protein bL9 (Stenotrophomonas maltophilia (strain K279a)).